The primary structure comprises 146 residues: Hemoglobin subunit beta-2 (146 aa).

The Globin domain occupies glutamate 2–histidine 146. Heme b-binding residues include histidine 63 and histidine 92.

The protein belongs to the globin family. In terms of assembly, hb2 is a heterotetramer of two alpha chains and two beta-2 chains. Red blood cells.

Involved in oxygen transport from gills to the various peripheral tissues. The protein is Hemoglobin subunit beta-2 (hbb2) of Cygnodraco mawsoni (Antarctic dragonfish).